The following is a 40-amino-acid chain: Photosystem II reaction center protein J (40 aa).

Residues 8-28 (IPLWLIGTVAGIPVIGLVGVF) traverse the membrane as a helical segment.

This sequence belongs to the PsbJ family. As to quaternary structure, PSII is composed of 1 copy each of membrane proteins PsbA, PsbB, PsbC, PsbD, PsbE, PsbF, PsbH, PsbI, PsbJ, PsbK, PsbL, PsbM, PsbT, PsbX, PsbY, PsbZ, Psb30/Ycf12, at least 3 peripheral proteins of the oxygen-evolving complex and a large number of cofactors. It forms dimeric complexes.

The protein resides in the plastid. Its subcellular location is the chloroplast thylakoid membrane. In terms of biological role, one of the components of the core complex of photosystem II (PSII). PSII is a light-driven water:plastoquinone oxidoreductase that uses light energy to abstract electrons from H(2)O, generating O(2) and a proton gradient subsequently used for ATP formation. It consists of a core antenna complex that captures photons, and an electron transfer chain that converts photonic excitation into a charge separation. The sequence is that of Photosystem II reaction center protein J from Hordeum jubatum (Foxtail barley).